The sequence spans 170 residues: Extracellular globin-3 (170 aa).

The signal sequence occupies residues 1-17 (MLRQLLVLVGLAVVCLA). The region spanning 23–169 (CCSEEDHRIV…ILTKISSRLN (147 aa)) is the Globin domain. The cysteines at positions 24 and 156 are disulfide-linked. Heme b is bound at residue histidine 119.

It belongs to the globin family. As to quaternary structure, the extracellular hemoglobin of the earthworm consists of 12 subunits that have a hexagonal bilayer structure with a molecular weight near 3.8 million. Each one-twelfth subunit is composed primarily of disulfide linked trimers (chains A, B, and C) and monomers (chain D).

It is found in the secreted. The sequence is that of Extracellular globin-3 from Lumbricus terrestris (Common earthworm).